The primary structure comprises 323 residues: MAAAALPAWLSLQSRARTLRAFSTAVYSATPVPTPSLPERTPGNERPPRRKALPPRTEKMAVDQDWPSVYPVAAPFKPSAVPLPVRMGYPVKKGVPMAKEGNLELLKIPNFLHLTPVAIKKHCEALKDFCTEWPAALDSDEKCEKHFPIEIDSTDYVSSGPSVRNPRARVVVLRVKLSSLNLDDHAKKKLIKLVGERYCKTTDVLTIKTDRCPLRRQNYDYAVYLLTVLYHESWNTEEWEKSKTEADMEEYIWENSSSERNILETLLQMKAAEKNMEINKEELLGTKEIEEYKKSVVSLKNEEENENSISQYKESVKRLLNVT.

The tract at residues Pro-31–Lys-59 is disordered. Positions Ser-257 to Asn-321 form a coiled coil.

The protein belongs to the mitochondrion-specific ribosomal protein mS35 family. Component of the mitochondrial small ribosomal subunit (mt-SSU). Mature mammalian 55S mitochondrial ribosomes consist of a small (28S) and a large (39S) subunit. The 28S small subunit contains a 12S ribosomal RNA (12S mt-rRNA) and 30 different proteins. The 39S large subunit contains a 16S rRNA (16S mt-rRNA), a copy of mitochondrial valine transfer RNA (mt-tRNA(Val)), which plays an integral structural role, and 52 different proteins.

Its subcellular location is the mitochondrion. This chain is Small ribosomal subunit protein mS35, found in Homo sapiens (Human).